Here is a 422-residue protein sequence, read N- to C-terminus: L-threonine dehydratase biosynthetic IlvA (422 aa).

At Lys-56 the chain carries N6-(pyridoxal phosphate)lysine. Pyridoxal 5'-phosphate-binding positions include Asn-83, Gly-189–Leu-193, and Ser-315. One can recognise an ACT-like domain in the interval His-339 to Glu-413.

It belongs to the serine/threonine dehydratase family. Homotetramer. Pyridoxal 5'-phosphate serves as cofactor.

The catalysed reaction is L-threonine = 2-oxobutanoate + NH4(+). The protein operates within amino-acid biosynthesis; L-isoleucine biosynthesis; 2-oxobutanoate from L-threonine: step 1/1. Its function is as follows. Catalyzes the anaerobic formation of alpha-ketobutyrate and ammonia from threonine in a two-step reaction. The first step involved a dehydration of threonine and a production of enamine intermediates (aminocrotonate), which tautomerizes to its imine form (iminobutyrate). Both intermediates are unstable and short-lived. The second step is the nonenzymatic hydrolysis of the enamine/imine intermediates to form 2-ketobutyrate and free ammonia. In the low water environment of the cell, the second step is accelerated by RidA. The protein is L-threonine dehydratase biosynthetic IlvA (ilvA) of Staphylococcus aureus (strain bovine RF122 / ET3-1).